We begin with the raw amino-acid sequence, 470 residues long: Type II NADH:quinone oxidoreductase NdhA (470 aa).

FAD contacts are provided by residues 21–25 and Val89; that span reads GSGFG. Glu184 is an active-site residue. FAD-binding positions include Asp323 and 334 to 335; that span reads AQ. The helical transmembrane segment at 389-409 threads the bilayer; it reads FAGYFAWLAWLVLHLVYLVGY.

This sequence belongs to the NADH dehydrogenase family. The cofactor is FAD.

The protein localises to the cell inner membrane. The catalysed reaction is a quinone + NADH + H(+) = a quinol + NAD(+). It catalyses the reaction a menaquinone + NADH + H(+) = a menaquinol + NAD(+). With respect to regulation, inhibited by phenothiazine analogs. Its function is as follows. Alternative, nonproton pumping NADH:quinone oxidoreductase that delivers electrons to the respiratory chain by oxidation of NADH and reduction of quinones. In Mycobacterium tuberculosis (strain ATCC 25618 / H37Rv), this protein is Type II NADH:quinone oxidoreductase NdhA.